The following is a 391-amino-acid chain: 3-ketoacyl-CoA thiolase (391 aa).

Cysteine 90 acts as the Acyl-thioester intermediate in catalysis. Catalysis depends on proton acceptor residues histidine 347 and cysteine 377.

This sequence belongs to the thiolase-like superfamily. Thiolase family.

It catalyses the reaction an acyl-CoA + acetyl-CoA = a 3-oxoacyl-CoA + CoA. It participates in lipid metabolism; fatty acid beta-oxidation. Involved in the degradation of long-chain fatty acids. This is 3-ketoacyl-CoA thiolase (fadA) from Bacillus subtilis (strain 168).